We begin with the raw amino-acid sequence, 355 residues long: Phosphoribosylformylglycinamidine cyclo-ligase (355 aa).

The protein belongs to the AIR synthase family.

Its subcellular location is the cytoplasm. It carries out the reaction 2-formamido-N(1)-(5-O-phospho-beta-D-ribosyl)acetamidine + ATP = 5-amino-1-(5-phospho-beta-D-ribosyl)imidazole + ADP + phosphate + H(+). It functions in the pathway purine metabolism; IMP biosynthesis via de novo pathway; 5-amino-1-(5-phospho-D-ribosyl)imidazole from N(2)-formyl-N(1)-(5-phospho-D-ribosyl)glycinamide: step 2/2. In Methylobacterium sp. (strain 4-46), this protein is Phosphoribosylformylglycinamidine cyclo-ligase.